The primary structure comprises 97 residues: Serine protease inhibitor Kazal-type 13 (97 aa).

Residues M1–S26 form the signal peptide. N-linked (GlcNAc...) asparagine glycosylation is present at N33. Residues R36 to E97 enclose the Kazal-like domain. 3 disulfides stabilise this stretch: C42/C78, C56/C75, and C64/C96.

Its subcellular location is the secreted. Functionally, may be a serine protease inhibitor. Essential for sperm maturation and fertility. Inhibits sperm acrosome reaction, protecting sperm from premature reaction. The chain is Serine protease inhibitor Kazal-type 13 (Spink13) from Mus musculus (Mouse).